The sequence spans 257 residues: Thioredoxin-dependent peroxide reductase, mitochondrial (257 aa).

The N-terminal 62 residues, 1-62, are a transit peptide targeting the mitochondrion; that stretch reads MAAAAGRLLW…SAFSTSSSFH (62 aa). The Thioredoxin domain maps to 64–222; it reads PAVTQHAPYF…TLRLVKAFQF (159 aa). An N6-succinyllysine modification is found at Lys-84. Position 92 is an N6-acetyllysine; alternate (Lys-92). Position 92 is an N6-succinyllysine; alternate (Lys-92). Cys-109 functions as the Cysteine sulfenic acid (-SOH) intermediate in the catalytic mechanism. The residue at position 147 (Thr-147) is a Phosphothreonine.

This sequence belongs to the peroxiredoxin family. AhpC/Prx1 subfamily. As to quaternary structure, homodimer; disulfide-linked, upon oxidation. 6 homodimers assemble to form a ring-like dodecamer. Interacts with NEK6. Interacts with LRRK2. Interacts with MAP3K13. Interacts with RPS6KC1 (via PX domain). Post-translationally, phosphorylated by LRRK2; phosphorylation reduces perodixase activity. In terms of processing, the enzyme can be inactivated by further oxidation of the cysteine sulfenic acid (C(P)-SOH) to sulphinic acid (C(P)-SO2H) and sulphonic acid (C(P)-SO3H) instead of its condensation to a disulfide bond. S-palmitoylated. In terms of tissue distribution, housekeeping-type gene preferentially expressed in murine erythroleukemia (MEL) cells.

It localises to the mitochondrion. The protein resides in the cytoplasm. The protein localises to the early endosome. It carries out the reaction a hydroperoxide + [thioredoxin]-dithiol = an alcohol + [thioredoxin]-disulfide + H2O. In terms of biological role, thiol-specific peroxidase that catalyzes the reduction of hydrogen peroxide and organic hydroperoxides to water and alcohols, respectively. Plays a role in cell protection against oxidative stress by detoxifying peroxides. Acts synergistically with MAP3K13 to regulate the activation of NF-kappa-B in the cytosol. Required for the maintenance of physical strength. This chain is Thioredoxin-dependent peroxide reductase, mitochondrial (Prdx3), found in Mus musculus (Mouse).